The sequence spans 516 residues: MSDVPGEDSPTHFYPVNFENYLRPKQSIKCQPLQRFKKPNERATNLYRNLKRLKILRWYNRVSKRFEEFPLPKFLGFLQARNDDGLCKRKTGFEIYCEMASIHGFHIFVGAKTWQRILWWLLICNAVLLSFTLVIMSLSMSKETPTIRFIDTMMKPTAEVPFPAVTICGFNTKEWMNSSQIVNQRNASWLELLEDLALPICPQIKICQWDNRMVNCLDQLQPIWTLDQRLCCSFNYNKQLFSSYLGVSFVLRSNDEILQSSKSAGFEVLIHESHEIPNGATPRVFVPGESDAHIMLRPYINRFTKNLKGLSLQKRGCYFSTERRLILSDVYNQINCLAECRTESILKSCGCIPPKSPIEKSWLICDLKQMQCVIDFDHDEIISGEQKNCDCLPPCEFNRYEFQSDIRFIKGMINNSIVNTSNQETTNEVRVRVYYDSAIAEELLLDVYENWLTFIGTFGGITGLFMGCSFVSVFELIFFSCVRPTCNWLTRQQILWRRRRNQRVGITESRSLGPAN.

2 helical membrane-spanning segments follow: residues 117 to 137 (ILWW…VIMS) and 454 to 474 (FIGT…VSVF).

This sequence belongs to the amiloride-sensitive sodium channel (TC 1.A.6) family. In terms of tissue distribution, expressed in embryonic and larval tracheal systems in the dorsal trunk and transverse connective (TC), but not in the junction between the dorsal trunk and TC, and in several tracheal branches and terminal cells. In larvae, also expressed in ventral pits. Expressed in the taste-sensing terminal organ of the larval head. In adult, expressed in hairs on the tibia, femur, tarsi of the leg and wing margin.

Its subcellular location is the membrane. In terms of biological role, part of a complex that plays a role in tracheal liquid clearance. In both larvae and adults, contributes to the behavioral response to salt. Probable role in sodium transport. This chain is Pickpocket protein 11 (ppk11), found in Drosophila melanogaster (Fruit fly).